The sequence spans 337 residues: Acetyl-coenzyme A synthetase (337 aa).

CoA is bound by residues 131–134, Thr249, and Asn273; that span reads RGGR. 325 to 327 is an ATP binding site; the sequence is GEP.

It belongs to the ATP-dependent AMP-binding enzyme family. Mg(2+) is required as a cofactor. In terms of processing, acetylated. Deacetylation by the SIR2-homolog deacetylase activates the enzyme.

The catalysed reaction is acetate + ATP + CoA = acetyl-CoA + AMP + diphosphate. Its function is as follows. Catalyzes the conversion of acetate into acetyl-CoA (AcCoA), an essential intermediate at the junction of anabolic and catabolic pathways. AcsA undergoes a two-step reaction. In the first half reaction, AcsA combines acetate with ATP to form acetyl-adenylate (AcAMP) intermediate. In the second half reaction, it can then transfer the acetyl group from AcAMP to the sulfhydryl group of CoA, forming the product AcCoA. In Nostoc linckia, this protein is Acetyl-coenzyme A synthetase (acsA).